Reading from the N-terminus, the 356-residue chain is GDP-mannose 4,6 dehydratase (356 aa).

Residues 12 to 17 (GITGQD), 69 to 70 (DL), 91 to 95 (LGAQS), and Tyr-106 each bind NADP(+). Thr-138 is an active-site residue. Catalysis depends on nucleophile residues Glu-140 and Tyr-162. Residues Lys-166, His-192, and Arg-197 each contribute to the NADP(+) site.

Belongs to the NAD(P)-dependent epimerase/dehydratase family. GDP-mannose 4,6-dehydratase subfamily. It depends on NADP(+) as a cofactor.

It carries out the reaction GDP-alpha-D-mannose = GDP-4-dehydro-alpha-D-rhamnose + H2O. The protein operates within nucleotide-sugar biosynthesis; GDP-L-fucose biosynthesis via de novo pathway; GDP-L-fucose from GDP-alpha-D-mannose: step 1/2. Participates in the synthesis of GDP-L-fucose, catalyzing the conversion of GDP-D-mannose to GDP-4-dehydro-6-deoxy-D-mannose (GDP-4-dehydro-alpha-D-rhamnose) which is further catalyzed by GDP-L-fucose synthase (ger). GDP-L-fucose is important for the synthesis of fucosylated N-glycans which are expressed on the cell surface. This Dictyostelium discoideum (Social amoeba) protein is GDP-mannose 4,6 dehydratase (gmd).